A 916-amino-acid polypeptide reads, in one-letter code: Phosphoenolpyruvate carboxylase (916 aa).

Residues histidine 144 and lysine 578 contribute to the active site.

Belongs to the PEPCase type 1 family. It depends on Mg(2+) as a cofactor.

The catalysed reaction is oxaloacetate + phosphate = phosphoenolpyruvate + hydrogencarbonate. Its function is as follows. Forms oxaloacetate, a four-carbon dicarboxylic acid source for the tricarboxylic acid cycle. The polypeptide is Phosphoenolpyruvate carboxylase (Aromatoleum aromaticum (strain DSM 19018 / LMG 30748 / EbN1) (Azoarcus sp. (strain EbN1))).